We begin with the raw amino-acid sequence, 875 residues long: MNFRLLEKYDPKAFEDEIYNKWLKNNVFLPNNSLFEKFSMVAPPPNVTGVLHMGHALNFVLQDILVRYKRMKKHNTLWLFGTDHAGIATQTVFERNLKNIGKSKNDFEREEFVKEIFKLKDKHRGVIVNQIKKLGASYDHSRERFTLDESLCKAVNKVFKDLYSKGLIYRGEYLVNLDPGSGSVVSDEEIEYKEVDGKLYFVKYFIDDSSFIEIATTRPETMFGDTAIAVNPNDERYKSLVGKEVTIPLTTKKIKIIADFHVDSAFGTGALKITPAHDPNDFEISKRHNIPKVNILTQDGKLNENVPLQYQGLSIKDARFKIEIELMEKGFLKGVKKHRQQVGHCYRSGEVIEPYLSTQWFVSMKPLAEKALKALESGELRFYPKKWENTYKYWLSNIKDWCISRQLVWGHRIPAWYNIDTSELIISDTDPSLDEKNVGKRFVQDPDVLDTWFSSWLWPFSSLGWPNITVDFENYYPTKTLITAYDIIFFWVARMVMAGLEFTGQTPFRDVYITPLLRDKQGKKMSKSLGNGIDPLDIIHEYGSDSLRFTLSFLSVQGQDLNIDAKDFMLGAKFANKVFNASKFILLNLENREIFNNLKFNDIDKWLLTSLNSTILGVESSFANYKYNEASKFVYEFFWNDFCDWYIEISKIDLNSENVDIQNMAISKLLFFLKKALLILHPFIPFVTEKIYSEFSEKGDILALNEYPSFDISSNFKEEFESFKVFKTFIVAVRTLKSEFNISSSIEIDVALKFDSDFKYEGYFKANESISKRMINFKNIFYNENCDGMLGLAVVGFEIYADVKLLIDKTKELIRLEKQLEKYKMLKISVSKKLENENFLMNAPKEIIESEKLKFVEFSSLINKINSYIINLKNL.

Positions 45-55 (PNVTGVLHMGH) match the 'HIGH' region motif. The 'KMSKS' region motif lies at 524 to 528 (KMSKS). Lys527 is a binding site for ATP. Residues 803-837 (VKLLIDKTKELIRLEKQLEKYKMLKISVSKKLENE) are a coiled coil.

It belongs to the class-I aminoacyl-tRNA synthetase family. ValS type 1 subfamily. As to quaternary structure, monomer.

It localises to the cytoplasm. It catalyses the reaction tRNA(Val) + L-valine + ATP = L-valyl-tRNA(Val) + AMP + diphosphate. In terms of biological role, catalyzes the attachment of valine to tRNA(Val). As ValRS can inadvertently accommodate and process structurally similar amino acids such as threonine, to avoid such errors, it has a 'posttransfer' editing activity that hydrolyzes mischarged Thr-tRNA(Val) in a tRNA-dependent manner. The protein is Valine--tRNA ligase of Borrelia garinii subsp. bavariensis (strain ATCC BAA-2496 / DSM 23469 / PBi) (Borreliella bavariensis).